The chain runs to 160 residues: Keratin-associated protein 9-6 (160 aa).

A run of 16 repeats spans residues 4–8, 13–17, 18–22, 37–41, 42–46, 47–51, 56–60, 61–65, 66–70, 75–79, 80–84, 90–94, 95–99, 140–144, 149–153, and 154–158. Positions 4–158 are 16 X 5 AA repeats of C-C-[GSVRQ]-[QTSPHN]-[TPSGYC]; it reads CCSPGCQPTC…CCVSSCCQHS (155 aa).

It belongs to the KRTAP type 9 family. As to quaternary structure, interacts with hair keratins.

In terms of biological role, in the hair cortex, hair keratin intermediate filaments are embedded in an interfilamentous matrix, consisting of hair keratin-associated proteins (KRTAP), which are essential for the formation of a rigid and resistant hair shaft through their extensive disulfide bond cross-linking with abundant cysteine residues of hair keratins. The matrix proteins include the high-sulfur and high-glycine-tyrosine keratins. The protein is Keratin-associated protein 9-6 of Homo sapiens (Human).